A 981-amino-acid polypeptide reads, in one-letter code: Peroxisomal ATPase PEX6 (981 aa).

Position 119 is an omega-N-methylarginine (Arg-119). ATP-binding positions include 471-478 (GPPGSGKT) and 745-752 (GPPGTGKT).

The protein belongs to the AAA ATPase family. In terms of assembly, interacts with PEX1; forming the PEX1-PEX6 AAA ATPase complex, which is composed of a heterohexamer formed by a trimer of PEX1-PEX6 dimers. Interacts with PEX26; interaction is direct and promotes recruitment to peroxisomal membranes. Interacts with ZFAND6. As to expression, in the teeth, expressed in ameloblasts and odontoblasts. Expressed in the retina, at higher levels in the ganglion cell layer and photoreceptor layer at the joint between the outer and inner segments.

It localises to the cytoplasm. The protein localises to the cytosol. The protein resides in the peroxisome membrane. It is found in the cell projection. Its subcellular location is the cilium. It localises to the photoreceptor outer segment. The catalysed reaction is ATP + H2O = ADP + phosphate + H(+). Component of the PEX1-PEX6 AAA ATPase complex, a protein dislocase complex that mediates the ATP-dependent extraction of the PEX5 receptor from peroxisomal membranes, an essential step for PEX5 recycling. Specifically recognizes PEX5 monoubiquitinated at 'Cys-11', and pulls it out of the peroxisome lumen through the PEX2-PEX10-PEX12 retrotranslocation channel. Extraction by the PEX1-PEX6 AAA ATPase complex is accompanied by unfolding of the TPR repeats and release of bound cargo from PEX5. This is Peroxisomal ATPase PEX6 from Mus musculus (Mouse).